A 114-amino-acid chain; its full sequence is uncharacterized protein (114 aa).

Residue C10 is part of the active site.

It belongs to the ArsC family.

This is an uncharacterized protein from Haemophilus influenzae (strain ATCC 51907 / DSM 11121 / KW20 / Rd).